Reading from the N-terminus, the 212-residue chain is Ribonuclease HII (212 aa).

Residues 20-209 (TCVVGVDEVG…VHNILYQEAS (190 aa)) form the RNase H type-2 domain. A divalent metal cation is bound by residues aspartate 26, glutamate 27, and aspartate 117.

It belongs to the RNase HII family. It depends on Mn(2+) as a cofactor. Mg(2+) is required as a cofactor.

The protein resides in the cytoplasm. It catalyses the reaction Endonucleolytic cleavage to 5'-phosphomonoester.. In terms of biological role, endonuclease that specifically degrades the RNA of RNA-DNA hybrids. The protein is Ribonuclease HII of Cereibacter sphaeroides (strain ATCC 17029 / ATH 2.4.9) (Rhodobacter sphaeroides).